We begin with the raw amino-acid sequence, 259 residues long: MLTRRIIPCLDVKAGRVVKGVKFLNHRDAGDPVELAAAYNAAGADELVFYDITASSDERAIMVEVVERTAAEVFIPLTVGGGLRSVDDMYRMLRAGADKVSLNTAAVYNPQLIAEGARRFGSQCIVLSVDAKRVNAPGEPPRWEVFTHTGANPRPTGLDAIEWIKRGIDLGAGEICINSMDADGARTGYDLELLQAITAISPVPVIASGGVGSPHDMYRGIVEGGADAVLAASIFHFGDYSVADVKRYLAERGVAVRMI.

Active-site residues include D11 and D130.

Belongs to the HisA/HisF family. In terms of assembly, heterodimer of HisH and HisF.

It is found in the cytoplasm. The enzyme catalyses 5-[(5-phospho-1-deoxy-D-ribulos-1-ylimino)methylamino]-1-(5-phospho-beta-D-ribosyl)imidazole-4-carboxamide + L-glutamine = D-erythro-1-(imidazol-4-yl)glycerol 3-phosphate + 5-amino-1-(5-phospho-beta-D-ribosyl)imidazole-4-carboxamide + L-glutamate + H(+). The protein operates within amino-acid biosynthesis; L-histidine biosynthesis; L-histidine from 5-phospho-alpha-D-ribose 1-diphosphate: step 5/9. IGPS catalyzes the conversion of PRFAR and glutamine to IGP, AICAR and glutamate. The HisF subunit catalyzes the cyclization activity that produces IGP and AICAR from PRFAR using the ammonia provided by the HisH subunit. The sequence is that of Imidazole glycerol phosphate synthase subunit HisF from Chloroflexus aurantiacus (strain ATCC 29366 / DSM 635 / J-10-fl).